A 101-amino-acid chain; its full sequence is Small ribosomal subunit protein uS14 (101 aa).

The protein belongs to the universal ribosomal protein uS14 family. Part of the 30S ribosomal subunit. Contacts proteins S3 and S10.

Binds 16S rRNA, required for the assembly of 30S particles and may also be responsible for determining the conformation of the 16S rRNA at the A site. The protein is Small ribosomal subunit protein uS14 of Pseudomonas syringae pv. tomato (strain ATCC BAA-871 / DC3000).